The following is a 277-amino-acid chain: MLNIGCHLSSSKGFKNMGENALKIGANTFQFFTRNPRGSKAKDIDENDVKEFLELAKENKFCKILAHAPYTLNACSADERNREFAIEIMADDLKRMEYIPNNLYNFHPGSHVKQGTEVGIEYISSALNSILKKDQTTKVLLETMSGKGTEVGRNFEEIAEIIKRVELKEHVGVCLDTCHIHDAGYDIVNELDEVLEEFDSMIGLDKLYAIHLNDSKNPFESHKDRHETIGNGYIGLDALTNIINHPKLCHLPFFLETPNELEGYKREIELLKSAYKK.

The Zn(2+) site is built by H67, H107, E142, D176, H179, H211, D224, H226, and E256.

It belongs to the AP endonuclease 2 family. The cofactor is Zn(2+).

It catalyses the reaction Endonucleolytic cleavage to 5'-phosphooligonucleotide end-products.. In terms of biological role, endonuclease IV plays a role in DNA repair. It cleaves phosphodiester bonds at apurinic or apyrimidinic (AP) sites, generating a 3'-hydroxyl group and a 5'-terminal sugar phosphate. The chain is Probable endonuclease 4 from Clostridium botulinum (strain Alaska E43 / Type E3).